We begin with the raw amino-acid sequence, 199 residues long: Golgi to ER traffic protein 1 (199 aa).

Over 1–11 the chain is Lumenal; it reads MLLPDLHPYTI. The helical transmembrane segment at 12–31 threads the bilayer; that stretch reads LLSIFLVLVAKQLVATIGKS. At 32-115 the chain is on the cytoplasmic side; it reads TIQEFVWLVY…SIDKASNALI (84 aa). Residues 76 to 116 adopt a coiled-coil conformation; sequence YAKWTKLNRQADKLSAELQKLNQEIQQQKSSIDKASNALIL. A helical transmembrane segment spans residues 116–136; sequence LVLTTLPIWIARVFYRKTHLF. Residues 137–160 lie on the Lumenal side of the membrane; sequence YIRQGIFPKYVEWVLALPFLPNGA. A helical transmembrane segment spans residues 161 to 177; that stretch reads VGLTIWMFAVNSVVSNF. The Cytoplasmic portion of the chain corresponds to 178–199; it reads SFLVSFPFAKRVSKPVRDTKVE.

Belongs to the WRB/GET1 family. In terms of assembly, component of the Golgi to ER traffic (GET) complex, which is composed of GET1, GET2 and GET3. Within the complex, GET1 and GET2 form a heterotetramer which is stabilized by phosphatidylinositol binding and which binds to the GET3 homodimer.

Its subcellular location is the endoplasmic reticulum membrane. It is found in the golgi apparatus membrane. In terms of biological role, required for the post-translational delivery of tail-anchored (TA) proteins to the endoplasmic reticulum. Together with GET2, acts as a membrane receptor for soluble GET3, which recognizes and selectively binds the transmembrane domain of TA proteins in the cytosol. The GET complex cooperates with the HDEL receptor ERD2 to mediate the ATP-dependent retrieval of resident ER proteins that contain a C-terminal H-D-E-L retention signal from the Golgi to the ER. This Candida albicans (strain SC5314 / ATCC MYA-2876) (Yeast) protein is Golgi to ER traffic protein 1.